A 655-amino-acid chain; its full sequence is p-hydroxybenzoic acid efflux pump subunit AaeB (655 aa).

10 helical membrane-spanning segments follow: residues 13-33 (FAVK…HFQL), 38-58 (WAVL…GGEP), 69-89 (LRII…IAMI), 93-113 (LLMI…SSLV), 121-141 (WGLA…EPLL), 152-172 (EIVV…PRSI), 370-390 (LFWL…IAVV), 407-427 (FIYG…VIIP), 431-451 (QSML…GIEV), and 481-501 (LFLD…TVIL).

Belongs to the aromatic acid exporter ArAE (TC 2.A.85) family.

The protein localises to the cell inner membrane. In terms of biological role, forms an efflux pump with AaeA. Could function as a metabolic relief valve, allowing to eliminate certain compounds when they accumulate to high levels in the cell. This is p-hydroxybenzoic acid efflux pump subunit AaeB from Escherichia fergusonii (strain ATCC 35469 / DSM 13698 / CCUG 18766 / IAM 14443 / JCM 21226 / LMG 7866 / NBRC 102419 / NCTC 12128 / CDC 0568-73).